Reading from the N-terminus, the 246-residue chain is Phosphonates import ATP-binding protein PhnC (246 aa).

Residues 2 to 246 (IKFENVSKIY…ILDEVYRKEA (245 aa)) form the ABC transporter domain. 35–42 (GTSGAGKS) contributes to the ATP binding site.

Belongs to the ABC transporter superfamily. Phosphonates importer (TC 3.A.1.9.1) family. In terms of assembly, the complex is composed of two ATP-binding proteins (PhnC), two transmembrane proteins (PhnE) and a solute-binding protein (PhnD).

It is found in the cell membrane. It carries out the reaction phosphonate(out) + ATP + H2O = phosphonate(in) + ADP + phosphate + H(+). Part of the ABC transporter complex PhnCDE involved in phosphonates import. Responsible for energy coupling to the transport system. The sequence is that of Phosphonates import ATP-binding protein PhnC from Lactococcus lactis subsp. lactis (strain IL1403) (Streptococcus lactis).